We begin with the raw amino-acid sequence, 270 residues long: Regulatory protein RecX (270 aa).

It belongs to the RecX family.

Its subcellular location is the cytoplasm. Modulates RecA activity. In Bacillus cereus (strain AH187), this protein is Regulatory protein RecX.